The sequence spans 265 residues: Type II pantothenate kinase (265 aa).

Residue 6–13 (DAGGTLIK) participates in ATP binding. Glu70 (proton acceptor) is an active-site residue. Residues Thr99, 121–125 (GGMIQ), Tyr137, and Ser225 each bind ATP.

It belongs to the type II pantothenate kinase family. As to quaternary structure, homodimer.

It localises to the cytoplasm. It carries out the reaction (R)-pantothenate + ATP = (R)-4'-phosphopantothenate + ADP + H(+). It participates in cofactor biosynthesis; coenzyme A biosynthesis; CoA from (R)-pantothenate: step 1/5. Functionally, catalyzes the phosphorylation of pantothenate (Pan), the first step in CoA biosynthesis. This Staphylococcus saprophyticus subsp. saprophyticus (strain ATCC 15305 / DSM 20229 / NCIMB 8711 / NCTC 7292 / S-41) protein is Type II pantothenate kinase.